Consider the following 122-residue polypeptide: Urease subunit beta (122 aa).

It belongs to the urease beta subunit family. In terms of assembly, heterotrimer of UreA (gamma), UreB (beta) and UreC (alpha) subunits. Three heterotrimers associate to form the active enzyme.

The protein localises to the cytoplasm. It catalyses the reaction urea + 2 H2O + H(+) = hydrogencarbonate + 2 NH4(+). It participates in nitrogen metabolism; urea degradation; CO(2) and NH(3) from urea (urease route): step 1/1. The chain is Urease subunit beta from Lysinibacillus sphaericus (strain C3-41).